The sequence spans 369 residues: DNA replication and repair protein RecF (369 aa).

30 to 37 serves as a coordination point for ATP; that stretch reads GQNGMGKT.

This sequence belongs to the RecF family.

It localises to the cytoplasm. The RecF protein is involved in DNA metabolism; it is required for DNA replication and normal SOS inducibility. RecF binds preferentially to single-stranded, linear DNA. It also seems to bind ATP. The chain is DNA replication and repair protein RecF from Bacteroides thetaiotaomicron (strain ATCC 29148 / DSM 2079 / JCM 5827 / CCUG 10774 / NCTC 10582 / VPI-5482 / E50).